A 444-amino-acid chain; its full sequence is Maintenance of mitochondrial morphology protein 1 (444 aa).

The Lumenal segment spans residues 1–110 (MNNLDNLAGN…SFSGWSFIEG (110 aa)). A helical membrane pass occupies residues 111 to 131 (FIIGQFSVIIVLIFFIKFFVF). Over 132–444 (SDGSSSNSSN…TDDVPLSKAE (313 aa)) the chain is Cytoplasmic. The SMP-LTD domain maps to 207 to 419 (PSESLDWFNV…EPRFQCIRLP (213 aa)).

It belongs to the MMM1 family. In terms of assembly, homodimer. Component of the ER-mitochondria encounter structure (ERMES) or MDM complex, composed of MMM1, MDM10, MDM12 and MDM34. An MMM1 homodimer associates with one molecule of MDM12 on each side in a pairwise head-to-tail manner, and the SMP-LTD domains of MMM1 and MDM12 generate a continuous hydrophobic tunnel for phospholipid trafficking.

The protein resides in the endoplasmic reticulum membrane. In terms of biological role, component of the ERMES/MDM complex, which serves as a molecular tether to connect the endoplasmic reticulum (ER) and mitochondria. Components of this complex are involved in the control of mitochondrial shape and protein biogenesis, and function in nonvesicular lipid trafficking between the ER and mitochondria. The MDM12-MMM1 subcomplex functions in the major beta-barrel assembly pathway that is responsible for biogenesis of all outer membrane beta-barrel proteins, and acts in a late step after the SAM complex. The MDM10-MDM12-MMM1 subcomplex further acts in the TOM40-specific pathway after the action of the MDM12-MMM1 complex. Essential for establishing and maintaining the structure of mitochondria and maintenance of mtDNA nucleoids. The sequence is that of Maintenance of mitochondrial morphology protein 1 from Vanderwaltozyma polyspora (strain ATCC 22028 / DSM 70294 / BCRC 21397 / CBS 2163 / NBRC 10782 / NRRL Y-8283 / UCD 57-17) (Kluyveromyces polysporus).